The sequence spans 539 residues: GMP synthase [glutamine-hydrolyzing] (539 aa).

A Glutamine amidotransferase type-1 domain is found at 4–202 (KILILDFGSQ…VLQIAGCKPD (199 aa)). Cysteine 81 functions as the Nucleophile in the catalytic mechanism. Active-site residues include histidine 176 and glutamate 178. The region spanning 203-395 (WVMRDHIEEA…LGLPPEMVYR (193 aa)) is the GMPS ATP-PPase domain. 230–236 (SGGVDSS) is an ATP binding site.

As to quaternary structure, homodimer.

It carries out the reaction XMP + L-glutamine + ATP + H2O = GMP + L-glutamate + AMP + diphosphate + 2 H(+). The protein operates within purine metabolism; GMP biosynthesis; GMP from XMP (L-Gln route): step 1/1. In terms of biological role, catalyzes the synthesis of GMP from XMP. The polypeptide is GMP synthase [glutamine-hydrolyzing] (Cupriavidus taiwanensis (strain DSM 17343 / BCRC 17206 / CCUG 44338 / CIP 107171 / LMG 19424 / R1) (Ralstonia taiwanensis (strain LMG 19424))).